Reading from the N-terminus, the 425-residue chain is Enolase (425 aa).

(2R)-2-phosphoglycerate is bound at residue Gln162. Glu204 functions as the Proton donor in the catalytic mechanism. The Mg(2+) site is built by Asp241, Glu282, and Asp309. The (2R)-2-phosphoglycerate site is built by Lys334, Arg363, Ser364, and Lys385. Lys334 (proton acceptor) is an active-site residue.

This sequence belongs to the enolase family. Requires Mg(2+) as cofactor.

It is found in the cytoplasm. The protein localises to the secreted. Its subcellular location is the cell surface. It catalyses the reaction (2R)-2-phosphoglycerate = phosphoenolpyruvate + H2O. The protein operates within carbohydrate degradation; glycolysis; pyruvate from D-glyceraldehyde 3-phosphate: step 4/5. Catalyzes the reversible conversion of 2-phosphoglycerate (2-PG) into phosphoenolpyruvate (PEP). It is essential for the degradation of carbohydrates via glycolysis. The protein is Enolase of Corynebacterium urealyticum (strain ATCC 43042 / DSM 7109).